Consider the following 132-residue polypeptide: Fatty acid-binding protein (132 aa).

(5Z,8Z,11Z,14Z)-eicosatetraenoate is bound by residues Arg-107 and 127-129 (RNY). (9Z)-octadecenoate-binding positions include Arg-107 and 127–129 (RNY).

Belongs to the calycin superfamily. Fatty-acid binding protein (FABP) family.

It is found in the cytoplasm. May play a role in the transport of fatty acids. Binds to various fatty acids but not retinoids. The sequence is that of Fatty acid-binding protein from Schistosoma japonicum (Blood fluke).